Consider the following 113-residue polypeptide: Large ribosomal subunit protein uL22 (113 aa).

It belongs to the universal ribosomal protein uL22 family. In terms of assembly, part of the 50S ribosomal subunit.

Its function is as follows. This protein binds specifically to 23S rRNA; its binding is stimulated by other ribosomal proteins, e.g. L4, L17, and L20. It is important during the early stages of 50S assembly. It makes multiple contacts with different domains of the 23S rRNA in the assembled 50S subunit and ribosome. The globular domain of the protein is located near the polypeptide exit tunnel on the outside of the subunit, while an extended beta-hairpin is found that lines the wall of the exit tunnel in the center of the 70S ribosome. In Mycoplasmopsis synoviae (strain 53) (Mycoplasma synoviae), this protein is Large ribosomal subunit protein uL22.